The primary structure comprises 643 residues: Phosphomethylpyrimidine synthase (643 aa).

Substrate contacts are provided by residues Asn-248, Met-277, Tyr-306, His-342, 362 to 364, 403 to 406, and Glu-442; these read SRG and DGLR. His-446 serves as a coordination point for Zn(2+). Substrate is bound at residue Tyr-469. Zn(2+) is bound at residue His-510. 3 residues coordinate [4Fe-4S] cluster: Cys-590, Cys-593, and Cys-598.

This sequence belongs to the ThiC family. As to quaternary structure, homodimer. [4Fe-4S] cluster is required as a cofactor.

The catalysed reaction is 5-amino-1-(5-phospho-beta-D-ribosyl)imidazole + S-adenosyl-L-methionine = 4-amino-2-methyl-5-(phosphooxymethyl)pyrimidine + CO + 5'-deoxyadenosine + formate + L-methionine + 3 H(+). The protein operates within cofactor biosynthesis; thiamine diphosphate biosynthesis. Its function is as follows. Catalyzes the synthesis of the hydroxymethylpyrimidine phosphate (HMP-P) moiety of thiamine from aminoimidazole ribotide (AIR) in a radical S-adenosyl-L-methionine (SAM)-dependent reaction. This is Phosphomethylpyrimidine synthase from Burkholderia cenocepacia (strain ATCC BAA-245 / DSM 16553 / LMG 16656 / NCTC 13227 / J2315 / CF5610) (Burkholderia cepacia (strain J2315)).